The sequence spans 215 residues: 3-isopropylmalate dehydratase small subunit (215 aa).

The protein belongs to the LeuD family. LeuD type 1 subfamily. As to quaternary structure, heterodimer of LeuC and LeuD.

It catalyses the reaction (2R,3S)-3-isopropylmalate = (2S)-2-isopropylmalate. The protein operates within amino-acid biosynthesis; L-leucine biosynthesis; L-leucine from 3-methyl-2-oxobutanoate: step 2/4. Functionally, catalyzes the isomerization between 2-isopropylmalate and 3-isopropylmalate, via the formation of 2-isopropylmaleate. The chain is 3-isopropylmalate dehydratase small subunit from Xanthomonas euvesicatoria pv. vesicatoria (strain 85-10) (Xanthomonas campestris pv. vesicatoria).